The primary structure comprises 358 residues: Heavy metal-associated isoprenylated plant protein 37 (358 aa).

The 64-residue stretch at 12 to 75 folds into the HMA domain; the sequence is IQTFSLRVNI…KLVKAGKHAE (64 aa). 2 residues coordinate a metal cation: C23 and C26. 2 disordered regions span residues 100–194 and 332–358; these read QKGQ…QNTQ and QQQSSHSHATNMSSEEDAGNNNSCNIM. Acidic residues predominate over residues 128-141; sequence AEEDGDGSEEEDGD. Low complexity predominate over residues 148 to 181; the sequence is ANQQQQQNVVNAKKNSGGAAMNNGNNGVNAASKK. 2 stretches are compositionally biased toward polar residues: residues 184-194 and 339-358; these read QKQSNHNQNTQ and HATNMSSEEDAGNNNSCNIM. C355 carries the cysteine methyl ester modification. A lipid anchor (S-farnesyl cysteine) is attached at C355. Positions 356–358 are cleaved as a propeptide — removed in mature form; the sequence is NIM.

It belongs to the HIPP family.

Functionally, heavy-metal-binding protein. The polypeptide is Heavy metal-associated isoprenylated plant protein 37 (Arabidopsis thaliana (Mouse-ear cress)).